Here is a 147-residue protein sequence, read N- to C-terminus: UPF0178 protein Patl_1318 (147 aa).

This sequence belongs to the UPF0178 family.

In Pseudoalteromonas atlantica (strain T6c / ATCC BAA-1087), this protein is UPF0178 protein Patl_1318.